Consider the following 134-residue polypeptide: Profilin-1 (134 aa).

A disulfide bond links Cys-13 and Cys-118. The short motif at 84–100 (AVIRGKKGSGGITIKKT) is the Involved in PIP2 interaction element. Phosphothreonine is present on Thr-114.

This sequence belongs to the profilin family. In terms of assembly, occurs in many kinds of cells as a complex with monomeric actin in a 1:1 ratio. Phosphorylated by MAP kinases.

Its subcellular location is the cytoplasm. The protein resides in the cytoskeleton. Its function is as follows. Binds to actin and affects the structure of the cytoskeleton. At high concentrations, profilin prevents the polymerization of actin, whereas it enhances it at low concentrations. This is Profilin-1 from Olea europaea (Common olive).